The following is a 215-amino-acid chain: MTDTPSNTDPLQSAIAPDFSSVPTQALDALRMKFSQLTASLSKIRDEMSRAELPQWYTLQAQLTVTLSQLSSLTNTLDHYEETLDATVAYPLPSFPTTAHEGLITTLMRKKNIPEVDEWIKDAKETNGLDVDSLSDAEIKKLINKDKDITSWATKCLLDERAKHSYTGLYTTKERQTESIDDRDNLYTSSVSNVKTSRPFSVDKVLKFVNQGESY.

A coiled-coil region spans residues 27–89 (LDALRMKFSQ…YEETLDATVA (63 aa)).

This sequence belongs to the Mediator complex subunit 8 family. In terms of assembly, component of the Mediator complex.

Its subcellular location is the nucleus. Functionally, component of the Mediator complex, a coactivator involved in the regulated transcription of nearly all RNA polymerase II-dependent genes. Mediator functions as a bridge to convey information from gene-specific regulatory proteins to the basal RNA polymerase II transcription machinery. Mediator is recruited to promoters by direct interactions with regulatory proteins and serves as a scaffold for the assembly of a functional preinitiation complex with RNA polymerase II and the general transcription factors. The chain is Mediator of RNA polymerase II transcription subunit 8 (MED8) from Kluyveromyces lactis (strain ATCC 8585 / CBS 2359 / DSM 70799 / NBRC 1267 / NRRL Y-1140 / WM37) (Yeast).